The sequence spans 147 residues: Large ribosomal subunit protein bL9 (147 aa).

This sequence belongs to the bacterial ribosomal protein bL9 family.

Its function is as follows. Binds to the 23S rRNA. In Clostridium novyi (strain NT), this protein is Large ribosomal subunit protein bL9.